A 573-amino-acid polypeptide reads, in one-letter code: Phosphoenolpyruvate-protein phosphotransferase (573 aa).

The active-site Tele-phosphohistidine intermediate is H190. The phosphoenolpyruvate site is built by R297 and R334. Mg(2+)-binding residues include E433 and D457. Residues 456 to 457 (ND) and R467 contribute to the phosphoenolpyruvate site. Residue C504 is the Proton donor of the active site.

The protein belongs to the PEP-utilizing enzyme family. Homodimer. The cofactor is Mg(2+).

The protein localises to the cytoplasm. It catalyses the reaction L-histidyl-[protein] + phosphoenolpyruvate = N(pros)-phospho-L-histidyl-[protein] + pyruvate. Its function is as follows. General (non sugar-specific) component of the phosphoenolpyruvate-dependent sugar phosphotransferase system (sugar PTS). This major carbohydrate active-transport system catalyzes the phosphorylation of incoming sugar substrates concomitantly with their translocation across the cell membrane. Enzyme I transfers the phosphoryl group from phosphoenolpyruvate (PEP) to the phosphoryl carrier protein (HPr). This chain is Phosphoenolpyruvate-protein phosphotransferase (ptsI), found in Borreliella burgdorferi (strain ATCC 35210 / DSM 4680 / CIP 102532 / B31) (Borrelia burgdorferi).